Here is a 317-residue protein sequence, read N- to C-terminus: MVLKNLSLLIILFFSTSVFSVSNNLINIPITVVATATGADSKTLSDLKNINGLNLQIPAKCFTKGKLPFLASSDEVRFNCLRDALFDKSDNVVWSLRGGYGSARIIPDLLKLSKPNKEKFFIGYSDITALHLFLSQEWGWRTIHGSNIADLLKTEKDQGNFTKLGEILKGKVKQVTIDNLIPLNDIAKSSDLVKGNLTGGNLTMVQTSIGTRWQIKTKGKILFLEDTNVAPFRLDRELLHLKQSMLLEGVKAIIFGSFGKDLDATMLVLRNFAYSLNIPVFKTNRFGHERINDPIIYNTNSKIIMSKHKEFKLIMEL.

Catalysis depends on Ser-125, which acts as the Nucleophile. Active-site charge relay system residues include Glu-225 and His-288.

It belongs to the peptidase S66 family.

The sequence is that of Putative carboxypeptidase RP402 from Rickettsia prowazekii (strain Madrid E).